Consider the following 376-residue polypeptide: 23S rRNA (uracil(747)-C(5))-methyltransferase RlmC (376 aa).

Residues Cys3, Cys11, Cys14, and Cys87 each contribute to the [4Fe-4S] cluster site. Positions 212, 241, 262, and 307 each coordinate S-adenosyl-L-methionine. Cys334 acts as the Nucleophile in catalysis.

It belongs to the class I-like SAM-binding methyltransferase superfamily. RNA M5U methyltransferase family. RlmC subfamily.

The enzyme catalyses uridine(747) in 23S rRNA + S-adenosyl-L-methionine = 5-methyluridine(747) in 23S rRNA + S-adenosyl-L-homocysteine + H(+). Its function is as follows. Catalyzes the formation of 5-methyl-uridine at position 747 (m5U747) in 23S rRNA. This Salmonella choleraesuis (strain SC-B67) protein is 23S rRNA (uracil(747)-C(5))-methyltransferase RlmC.